Here is a 453-residue protein sequence, read N- to C-terminus: Charged multivesicular body protein 7 (453 aa).

The disordered stretch occupies residues 1 to 22 (MWSPEREAEAPAGGDPAGLLPP). The segment covering 10 to 22 (APAGGDPAGLLPP) has biased composition (low complexity). Position 232 is a phosphoserine (S232). A coiled-coil region spans residues 243–312 (QLMQSEQLLS…DTVQGILDRI (70 aa)). The span at 392-403 (TKEPLDLPDNPR) shows a compositional bias: basic and acidic residues. Disordered regions lie at residues 392–417 (TKEPLDLPDNPRNRHFTNSVPNPRIS) and 431–453 (SEGGLVPSSKSPKRQLEPTLKPL). At T408 the chain carries Phosphothreonine. Residues S410, S417, S431, and S441 each carry the phosphoserine modification.

This sequence belongs to the SNF7 family. In terms of assembly, interacts with CHMP4B, but not with VPS25. Interacts with LEMD2 (via C-terminus).

It localises to the cytoplasm. It is found in the nucleus envelope. ESCRT-III-like protein required to recruit the ESCRT-III complex to the nuclear envelope (NE) during late anaphase. Together with SPAST, the ESCRT-III complex promotes NE sealing and mitotic spindle disassembly during late anaphase. Recruited to the reforming NE during anaphase by LEMD2. Plays a role in the endosomal sorting pathway. This is Charged multivesicular body protein 7 (CHMP7) from Homo sapiens (Human).